A 67-amino-acid polypeptide reads, in one-letter code: Large ribosomal subunit protein bL35 (67 aa).

The protein belongs to the bacterial ribosomal protein bL35 family.

The protein is Large ribosomal subunit protein bL35 of Acidovorax ebreus (strain TPSY) (Diaphorobacter sp. (strain TPSY)).